The sequence spans 513 residues: Galactose-1-phosphate uridylyltransferase (513 aa).

It belongs to the galactose-1-phosphate uridylyltransferase type 2 family.

It is found in the cytoplasm. The enzyme catalyses alpha-D-galactose 1-phosphate + UDP-alpha-D-glucose = alpha-D-glucose 1-phosphate + UDP-alpha-D-galactose. It participates in carbohydrate metabolism; galactose metabolism. The polypeptide is Galactose-1-phosphate uridylyltransferase (galT) (Bacillus subtilis (strain 168)).